The chain runs to 105 residues: Large ribosomal subunit protein uL24 (105 aa).

It belongs to the universal ribosomal protein uL24 family. As to quaternary structure, part of the 50S ribosomal subunit.

In terms of biological role, one of two assembly initiator proteins, it binds directly to the 5'-end of the 23S rRNA, where it nucleates assembly of the 50S subunit. One of the proteins that surrounds the polypeptide exit tunnel on the outside of the subunit. This is Large ribosomal subunit protein uL24 from Francisella philomiragia subsp. philomiragia (strain ATCC 25017 / CCUG 19701 / FSC 153 / O#319-036).